A 606-amino-acid polypeptide reads, in one-letter code: NADH-ubiquinone oxidoreductase chain 5 (606 aa).

M1 carries the post-translational modification N-formylmethionine. The next 15 helical transmembrane spans lie at 4–24 (FSSL…MMSF), 43–63 (AFIT…ELII), 87–107 (MMFI…SMWY), 117–137 (FFKY…ANNL), 140–160 (LFIG…WWYG), 171–191 (AILY…WFLT), 213–233 (LIGL…HPWL), 241–261 (TPVS…FLLI), 273–293 (IQSI…MCAL), 310–330 (LGLM…LHIC), 366–386 (MPFT…MPFL), 413–433 (LIAT…ALLG), 457–477 (LLIG…PTTI), 482–502 (MPYY…ILAL), and 582–602 (GLIK…MILF).

Core subunit of respiratory chain NADH dehydrogenase (Complex I) which is composed of 45 different subunits.

It localises to the mitochondrion inner membrane. It carries out the reaction a ubiquinone + NADH + 5 H(+)(in) = a ubiquinol + NAD(+) + 4 H(+)(out). Core subunit of the mitochondrial membrane respiratory chain NADH dehydrogenase (Complex I) which catalyzes electron transfer from NADH through the respiratory chain, using ubiquinone as an electron acceptor. Essential for the catalytic activity and assembly of complex I. In Bos taurus (Bovine), this protein is NADH-ubiquinone oxidoreductase chain 5 (MT-ND5).